Consider the following 243-residue polypeptide: Phosphoadenosine 5'-phosphosulfate reductase (243 aa).

Residue Cys239 is the Nucleophile; cysteine thiosulfonate intermediate of the active site.

It belongs to the PAPS reductase family. CysH subfamily.

It is found in the cytoplasm. The enzyme catalyses [thioredoxin]-disulfide + sulfite + adenosine 3',5'-bisphosphate + 2 H(+) = [thioredoxin]-dithiol + 3'-phosphoadenylyl sulfate. It functions in the pathway sulfur metabolism; hydrogen sulfide biosynthesis; sulfite from sulfate: step 3/3. In terms of biological role, catalyzes the formation of sulfite from phosphoadenosine 5'-phosphosulfate (PAPS) using thioredoxin as an electron donor. The sequence is that of Phosphoadenosine 5'-phosphosulfate reductase from Proteus mirabilis (strain HI4320).